Reading from the N-terminus, the 142-residue chain is Transcriptional regulator MraZ (142 aa).

SpoVT-AbrB domains lie at 5–51 (ASAL…PRPE) and 77–120 (AMDV…DSQT).

This sequence belongs to the MraZ family. Forms oligomers.

The protein resides in the cytoplasm. Its subcellular location is the nucleoid. This Burkholderia multivorans (strain ATCC 17616 / 249) protein is Transcriptional regulator MraZ.